Consider the following 397-residue polypeptide: Yellow-related salivary protein LJM111 (397 aa).

Residues 1–18 (MKLFFFLYTFGLVQTIFG) form the signal peptide.

The protein belongs to the major royal jelly protein family. In terms of tissue distribution, salivary gland (at protein level).

Its subcellular location is the secreted. In terms of biological role, probably modulates blood feeding of sand flies on vertebrate species by binding and sequestering different mediators involved in the host response. Binds biogenic amines. Binds adrenaline and noradrenaline with high affinity. Binds serotonin. Binds dopamine and octopamine. Exhibits anti-inflammatory effects in the host: reduces IL17A, TNF-alpha (TNF) and IFN-gamma (IFNG) production by host lymph node cells, suppresses expression of MHC-II and CD86, reduces TNF-alpha production and increases IL10 production, in host bone marrow-derived dendritic cells (BMDCs) stimulated by lipopolysaccharides. Reduces pain in mouse mechanical hypernociception model. In Lutzomyia longipalpis (Sand fly), this protein is Yellow-related salivary protein LJM111.